A 586-amino-acid chain; its full sequence is Non-structural glycoprotein GNS (586 aa).

The N-terminal stretch at 1-14 is a signal peptide; it reads MFLQLFNIVLIYGV. At 15-544 the chain is on the extracellular side; that stretch reads RTSQSTWINY…QNKEYWNEES (530 aa). 8 N-linked (GlcNAc...) asparagine; by host glycosylation sites follow: Asn-27, Asn-68, Asn-274, Asn-350, Asn-383, Asn-476, Asn-501, and Asn-521. A helical membrane pass occupies residues 545 to 562; sequence SIWGISTIITVLGIYYIY. Over 563 to 586 the chain is Cytoplasmic; that stretch reads RKNRREKIFLNMKHRVQRFFKLDY.

The protein belongs to the ephemerovirus glycoprotein family.

The protein resides in the host membrane. This Bos taurus (Bovine) protein is Non-structural glycoprotein GNS (GNS).